The primary structure comprises 562 residues: DNA-binding protein MutS2 (562 aa).

Residue 380–387 participates in ATP binding; that stretch reads GANSGGKT.

This sequence belongs to the DNA mismatch repair MutS family. Archaeal Muts2 subfamily. As to quaternary structure, multimer. Requires Co(2+) as cofactor. Mn(2+) is required as a cofactor.

Functionally, has ATPase and non-specific DNA-binding activities. May be involved in recombination and/or recombinational repair. Not involved in mismatch repair. This chain is DNA-binding protein MutS2, found in Pyrococcus furiosus (strain ATCC 43587 / DSM 3638 / JCM 8422 / Vc1).